The sequence spans 514 residues: Nucleus accumbens-associated protein 1 (514 aa).

The 65-residue stretch at cysteine 30–methionine 94 folds into the BTB domain. Residue lysine 167 forms a Glycyl lysine isopeptide (Lys-Gly) (interchain with G-Cter in SUMO1); alternate linkage. A Glycyl lysine isopeptide (Lys-Gly) (interchain with G-Cter in SUMO2); alternate cross-link involves residue lysine 167. Lysine 182 participates in a covalent cross-link: Glycyl lysine isopeptide (Lys-Gly) (interchain with G-Cter in SUMO2). Disordered regions lie at residues arginine 183–proline 218 and glycine 241–threonine 279. Serine 187 is subject to Phosphoserine. Positions proline 242–glycine 251 are enriched in polar residues. Residue serine 245 is modified to Phosphoserine; by PKC. Over residues threonine 252–tyrosine 264 the composition is skewed to low complexity. The span at glutamate 267–threonine 279 shows a compositional bias: acidic residues. Residues lysine 304, lysine 438, lysine 466, and lysine 485 each participate in a glycyl lysine isopeptide (Lys-Gly) (interchain with G-Cter in SUMO2) cross-link. Residues glycine 360–valine 457 enclose the BEN domain. A phosphoserine mark is found at serine 492 and serine 496.

Homooligomer; mediated by the BTB domain. Both isoforms interact with HDAC3 and HDAC4. Interacts (via BTB domain) with CUL3, PSMD7 and RCOR1. Phosphorylated by protein kinase C (PKC). In terms of tissue distribution, highly expressed in the hippocampus, brain cortex, cerebellum and brainstem. Expressed in the nucleus accumbens, olfactory tubercle, the striatum, frontal and parietal cortex and ventral pallidum. Weakly expressed in the heart, liver, kidney, spleen, testis, and skeletal muscle. Isoform 2 is expressed in the brain and liver, less abundantly expressed in the brain than isoform 1.

The protein resides in the nucleus. Its subcellular location is the cytoplasm. Functionally, functions as a transcriptional repressor. Isoform 1 is a stronger transcriptional repressor than isoform 2. Seems to function as a transcriptional corepressor in neuronal cells through recruitment of HDAC3 and HDAC4. Contributes to tumor progression, and tumor cell proliferation and survival. This may be mediated at least in part through repressing transcriptional activity of GADD45GIP1. Required for recruiting the proteasome from the nucleus to the cytoplasm and dendritic spines. The chain is Nucleus accumbens-associated protein 1 (Nacc1) from Rattus norvegicus (Rat).